Here is a 696-residue protein sequence, read N- to C-terminus: Tensin-4 (696 aa).

The signal sequence occupies residues 1-14 (MSSSLLAGGHMVSL). Disordered stretches follow at residues 157 to 246 (LDGP…RAPQ), 271 to 344 (SLPH…CPAS), and 356 to 416 (LING…KDMQ). The span at 192-203 (SSSNESLIFSGN) shows a compositional bias: polar residues. The residue at position 230 (Ser-230) is a Phosphoserine. The span at 271–304 (SLPHSSLSSYPSSSRSLGSPASSSSSLHSLDRGS) shows a compositional bias: low complexity. Polar residues-rich tracts occupy residues 326 to 344 (QAVQSTPVAKEQASSCPAS) and 372 to 397 (PGHQDSVQSRVTSPSHLCQAIKSPSK). Positions 429–536 (WFKPSITREQ…ALPCKLTIPQ (108 aa)) constitute an SH2 domain. Residues 563–690 (CHTLYLSSVS…QVISLVTALL (128 aa)) form the PTB domain.

This sequence belongs to the PTEN phosphatase protein family. Interacts (via SH2 domain) with Rho GTPase-activating protein DLC1 (via C-terminus); the interaction is independent of DLC1 tyrosine phosphorylation. Interacts with integrin ITGB1; the interaction displaces tensin TNS3 from the ITGB1 cytoplasmic tail and promotes ITGB1 stability. Interacts (via SH2 domain) with E3 ubiquitin-protein ligase CBL (phosphorylated on 'Tyr-780'); the interaction is enhanced in the presence of EGF and reduces interaction of CBL with EGFR. Interacts (via SH2 domain) with receptor tyrosine kinase MET (when phosphorylated); the interaction increases MET protein stability.

It is found in the cell junction. It localises to the focal adhesion. The protein localises to the cytoplasm. The protein resides in the cytoskeleton. Its function is as follows. Promotes EGF-induced cell migration by displacing tensin TNS3 from the cytoplasmic tail of integrin ITGB1 which results in dissociation of TNS3 from focal adhesions, disassembly of actin stress fibers and initiation of cell migration. Suppresses ligand-induced degradation of EGFR by reducing EGFR ubiquitination in the presence of EGF. Increases MET protein stability by inhibiting MET endocytosis and subsequent lysosomal degradation which leads to increased cell survival, proliferation and migration. The protein is Tensin-4 (Tns4) of Mus musculus (Mouse).